A 115-amino-acid chain; its full sequence is Holo-[acyl-carrier-protein] synthase (115 aa).

Asp6 and Glu51 together coordinate Mg(2+).

This sequence belongs to the P-Pant transferase superfamily. AcpS family. The cofactor is Mg(2+).

Its subcellular location is the cytoplasm. The enzyme catalyses apo-[ACP] + CoA = holo-[ACP] + adenosine 3',5'-bisphosphate + H(+). Functionally, transfers the 4'-phosphopantetheine moiety from coenzyme A to a Ser of acyl-carrier-protein. In Campylobacter jejuni subsp. doylei (strain ATCC BAA-1458 / RM4099 / 269.97), this protein is Holo-[acyl-carrier-protein] synthase.